An 81-amino-acid chain; its full sequence is Xenopsin peptides (81 aa).

Positions 1-20 (MYKGIFLCVLLAVICANSLA) are cleaved as a signal peptide. Positions 21 to 37 (TPSSDADEDNDEVERYV) are excised as a propeptide. Positions 65 to 73 (EAMLRSAEA) are cleaved as a propeptide — removed in mature form by a dipeptidylpeptidase.

Belongs to the gastrin/cholecystokinin family. Magainin subfamily. XPF is synthesized in the stomach and stored in a novel granular multinucleated cell in the gastric mucosa, it is stored as active, processed peptides in large granules within the granular gland secretions of the skin.

It is found in the secreted. Xenopsin is a neurotensin-like octapeptide. Functionally, XPF has antimicrobial activity. The protein is Xenopsin peptides of Xenopus laevis (African clawed frog).